The sequence spans 435 residues: Putative F-box/kelch-repeat protein At1g13200 (435 aa).

The interval Met-1–Arg-29 is disordered. Residues Gln-16–Arg-29 show a composition bias toward basic residues. One can recognise an F-box domain in the interval Leu-37 to Arg-82. Kelch repeat units lie at residues Ser-164–Leu-217, Asp-224–Ala-270, Ser-273–Met-317, and Asn-322–Asp-368.

This is Putative F-box/kelch-repeat protein At1g13200 from Arabidopsis thaliana (Mouse-ear cress).